Reading from the N-terminus, the 880-residue chain is Dynamin-like protein A (880 aa).

Residues 1-124 (MSVFKKKDKS…QVELERKRRD (124 aa)) are disordered. Positions 8 to 20 (DKSDDKKKKHDEE) are enriched in basic and acidic residues. Over residues 22–31 (PQGTFQPASQ) the composition is skewed to polar residues. Over residues 32-68 (STSNTNLNSLASSVNNGASVGSTNGSTPNNSNGSTPT) the composition is skewed to low complexity. Residues 69-152 (YNHNNSAEEL…NEQVEISSLE (84 aa)) adopt a coiled-coil conformation. Basic and acidic residues-rich tracts occupy residues 77–94 (ELEK…KSEL) and 103–124 (KKKE…KRRD). Residues 191–478 (AVSHPEIVFV…VWKSYQDTIP (288 aa)) enclose the Dynamin-type G domain. The interval 201 to 208 (GPRSSGKS) is G1 motif. 201 to 208 (GPRSSGKS) contacts GTP. The segment at 227 to 240 (IVGVGGSNANGCSK) is G2 motif. Residues 315-318 (DSPG) are G3 motif. GTP contacts are provided by residues 315-319 (DSPGL) and 380-383 (TKFH). Residues 380–383 (TKFH) form a G4 motif region. The segment at 413–416 (LPNH) is G5 motif. A coiled-coil region spans residues 479 to 509 (RILKHLRSKRQTAEATLNELQKQSSSLDSTK). Positions 532-543 (TSEGNPSANGQT) are enriched in polar residues. Positions 532–551 (TSEGNPSANGQTLDEEKSQQ) are disordered. Residues 824-861 (SNEQLEQLFEVQATREQLKQEEKKQQQILEKYSQIDEQ) adopt a coiled-coil conformation.

It belongs to the TRAFAC class dynamin-like GTPase superfamily. Dynamin/Fzo/YdjA family.

It localises to the cytoplasm. The protein localises to the cleavage furrow. The enzyme catalyses GTP + H2O = GDP + phosphate + H(+). Functionally, involved in cytokinesis. May hydrolyze GTP. This Dictyostelium discoideum (Social amoeba) protein is Dynamin-like protein A (dlpA).